Here is a 506-residue protein sequence, read N- to C-terminus: BTB/POZ domain-containing protein At3g22104 (506 aa).

The 71-residue stretch at 6-76 folds into the BTB domain; that stretch reads SDLEVDINGE…CYNDGRVAVM (71 aa). The NPH3 domain occupies 187 to 435; that stretch reads TWWFDEVLVL…LDEQQQQQQQ (249 aa). Residues 421 to 492 adopt a coiled-coil conformation; the sequence is QAIETLDEQQ…MEVIKKRSKS (72 aa). A disordered region spans residues 485–506; the sequence is VIKKRSKSSSKGSNRSLPKLCS.

The protein belongs to the NPH3 family.

The protein operates within protein modification; protein ubiquitination. In terms of biological role, may act as a substrate-specific adapter of an E3 ubiquitin-protein ligase complex (CUL3-RBX1-BTB) which mediates the ubiquitination and subsequent proteasomal degradation of target proteins. The polypeptide is BTB/POZ domain-containing protein At3g22104 (Arabidopsis thaliana (Mouse-ear cress)).